Reading from the N-terminus, the 156-residue chain is Cell division protein SepF (156 aa).

Over residues 23–36 (SYEKEQTDMKKQQD) the composition is skewed to basic and acidic residues. Positions 23 to 49 (SYEKEQTDMKKQQDPPEQQDVTFPKAQ) are disordered.

The protein belongs to the SepF family. As to quaternary structure, homodimer. Interacts with FtsZ.

It is found in the cytoplasm. Cell division protein that is part of the divisome complex and is recruited early to the Z-ring. Probably stimulates Z-ring formation, perhaps through the cross-linking of FtsZ protofilaments. Its function overlaps with FtsA. The chain is Cell division protein SepF from Bacillus anthracis (strain CDC 684 / NRRL 3495).